The following is a 382-amino-acid chain: Anhydro-N-acetylmuramic acid kinase (382 aa).

ATP is bound at residue 9 to 16; it reads GTSLDGID.

Belongs to the anhydro-N-acetylmuramic acid kinase family.

It carries out the reaction 1,6-anhydro-N-acetyl-beta-muramate + ATP + H2O = N-acetyl-D-muramate 6-phosphate + ADP + H(+). It participates in amino-sugar metabolism; 1,6-anhydro-N-acetylmuramate degradation. Its pathway is cell wall biogenesis; peptidoglycan recycling. Its function is as follows. Catalyzes the specific phosphorylation of 1,6-anhydro-N-acetylmuramic acid (anhMurNAc) with the simultaneous cleavage of the 1,6-anhydro ring, generating MurNAc-6-P. Is required for the utilization of anhMurNAc either imported from the medium or derived from its own cell wall murein, and thus plays a role in cell wall recycling. This Bacillus cereus (strain 03BB102) protein is Anhydro-N-acetylmuramic acid kinase.